Reading from the N-terminus, the 469-residue chain is Adenosylhomocysteinase (469 aa).

Substrate-binding residues include Thr58, Asp133, and Glu195. 196–198 serves as a coordination point for NAD(+); sequence TTT. Substrate is bound by residues Lys225 and Asp229. NAD(+) contacts are provided by residues Asn230, 259 to 264, Glu282, Asn317, 338 to 340, and Asn383; these read GFGDVG and IGH.

Belongs to the adenosylhomocysteinase family. NAD(+) is required as a cofactor.

Its subcellular location is the cytoplasm. The catalysed reaction is S-adenosyl-L-homocysteine + H2O = L-homocysteine + adenosine. The protein operates within amino-acid biosynthesis; L-homocysteine biosynthesis; L-homocysteine from S-adenosyl-L-homocysteine: step 1/1. Functionally, may play a key role in the regulation of the intracellular concentration of adenosylhomocysteine. This chain is Adenosylhomocysteinase, found in Rhodopseudomonas palustris (strain ATCC BAA-98 / CGA009).